The primary structure comprises 250 residues: Aquaporin (250 aa).

Residues 1–15 lie on the Cytoplasmic side of the membrane; sequence MTRETLKTLQSTFGE. A helical membrane pass occupies residues 16-36; that stretch reads MVASFVFGFAVYSALLGSALT. Topologically, residues 37–42 are extracellular; that stretch reads EQSAAR. The chain crosses the membrane as a helical span at residues 43–63; the sequence is VIVGLTVGFSGICVIYSFCDV. Residues 64 to 86 lie on the Cytoplasmic side of the membrane; the sequence is TVAHFNPAITLAAILTCKLGVLR. Positions 69–71 match the NPA motif; sequence NPA. Residues 87 to 107 form a helical membrane-spanning segment; it reads GIGYIVAQYIGFILAVCALLP. The Extracellular portion of the chain corresponds to 108–133; sequence CSPVGYKETLNIIRPTPSPFGGDNLN. The chain crosses the membrane as a helical span at residues 134 to 154; the sequence is VFFTEFFLTAILVHVAFATAV. The Cytoplasmic segment spans residues 155-179; sequence NPYKPKTDTEGKFVDPDEEEPVDRR. A helical transmembrane segment spans residues 180-200; sequence ITAPLCIGLTLGFLAFLGLAS. At 201–224 the chain is on the extracellular side; that stretch reads SGGAFNPGLTLAPVIMSNTWNHFW. Residues 206–208 carry the NPG motif; it reads NPG. The helical transmembrane segment at 225 to 245 threads the bilayer; the sequence is AYFAGQYLGGFVGGLLQVLVL. The Cytoplasmic portion of the chain corresponds to 246 to 250; it reads YKLSF.

This sequence belongs to the MIP/aquaporin (TC 1.A.8) family.

Its subcellular location is the cell membrane. Functionally, water channel required to facilitate the transport of water across membranes. Involved in osmotolerance. This is Aquaporin (AQP) from Encephalitozoon cuniculi (strain GB-M1) (Microsporidian parasite).